A 250-amino-acid polypeptide reads, in one-letter code: 5-oxoprolinase subunit A (250 aa).

Belongs to the LamB/PxpA family. Forms a complex composed of PxpA, PxpB and PxpC.

It carries out the reaction 5-oxo-L-proline + ATP + 2 H2O = L-glutamate + ADP + phosphate + H(+). Its function is as follows. Catalyzes the cleavage of 5-oxoproline to form L-glutamate coupled to the hydrolysis of ATP to ADP and inorganic phosphate. In Nocardia farcinica (strain IFM 10152), this protein is 5-oxoprolinase subunit A.